The primary structure comprises 561 residues: Zinc finger protein 37A (561 aa).

The KRAB domain maps to 8–79 (VSFRDVTVGF…EEKFPSQSHL (72 aa)). The C2H2-type 1; degenerate zinc finger occupies 146–168 (FEYNECGKAFPENSLFLVHKRGY). The C2H2-type 2; degenerate zinc-finger motif lies at 243–265 (IEYNECGTFFSEKLVLHLQQRTH). 10 C2H2-type zinc fingers span residues 271 to 293 (YECHECGKTFTQKSAHTRHQRTH), 299 to 321 (YECHECGKTFYKNSDLIKHQRIH), 327 to 349 (YGCHECGKSFSEKSTLTQHQRTH), 355 to 377 (YECHECGKTFSFKSVLTVHQKTH), 383 to 405 (YECYACGKAFLRKSDLIKHQRIH), 411 to 433 (YECNECGKSFSEKSTLTKHLRTH), 439 to 461 (YECIQCGKFFCYYSGFTEHLRRH), 467 to 489 (FGCNECGKTFRQKSALIVHQRTH), 495 to 517 (YGCNQCGKSFCVKSKLIAHHRTH), and 523 to 545 (YECNVCGKSFYVKSKLTVHQRIH).

It belongs to the krueppel C2H2-type zinc-finger protein family.

It is found in the nucleus. May be involved in transcriptional regulation. The sequence is that of Zinc finger protein 37A (ZNF37A) from Homo sapiens (Human).